The following is a 304-amino-acid chain: Putative S-adenosyl-L-methionine-dependent methyltransferase MUL_0816 (304 aa).

Residues Asp130 and 159–160 (DL) contribute to the S-adenosyl-L-methionine site.

It belongs to the UPF0677 family.

Exhibits S-adenosyl-L-methionine-dependent methyltransferase activity. The polypeptide is Putative S-adenosyl-L-methionine-dependent methyltransferase MUL_0816 (Mycobacterium ulcerans (strain Agy99)).